The sequence spans 189 residues: Thermostable direct hemolysin-related (189 aa).

The first 24 residues, 1 to 24 (MKYRYFAKKSFLFISMLAAFKTFA), serve as a signal peptide directing secretion. Cys175 and Cys185 are disulfide-bonded.

It belongs to the TDH hemolysin family. As to quaternary structure, homodimer.

In terms of biological role, bacterial hemolysins are exotoxins that attack blood cell membranes and cause cell rupture by mechanisms not clearly defined. This chain is Thermostable direct hemolysin-related (tdh3), found in Vibrio parahaemolyticus.